Reading from the N-terminus, the 417-residue chain is Guanine nucleotide-exchange factor SEC12 (417 aa).

At 1 to 388 (MGRRRGVELY…QLHLLPSRRS (388 aa)) the chain is on the cytoplasmic side. Tyr-10 bears the 3'-nitrotyrosine mark. Residues 101–135 (KGSKAEKSGSKEQGPRQRKGAAPAEKKSGAEVHPE) are disordered. Composition is skewed to basic and acidic residues over residues 103–115 (SKAE…EQGP) and 124–135 (AEKKSGAEVHPE). WD repeat units follow at residues 152–191 (STEP…KVLE), 194–232 (AHEG…TQLQ), and 298–337 (CGHE…RLYY). A helical transmembrane segment spans residues 389–409 (VPVWLLLLLCVGLIIVTILLL). Over 410–417 (QSAFPGFL) the chain is Lumenal.

As to quaternary structure, interacts with SAR1B (GDP-bound form). Interacts with MIA2; recruits PREB to endoplasmic reticulum exit sites. Interacts with CIDEB; facilitating loading of SCAP-SREBP into COPII vesicles.

Its subcellular location is the endoplasmic reticulum membrane. It is found in the nucleus. Guanine nucleotide exchange factor (GEF) that regulates the assembly of the coat protein complex II/COPII in endoplasmic reticulum (ER) to Golgi vesicle-mediated transport. Selectively activates SAR1A and SAR1B by promoting the exchange of guanosine diphosphate (GDP) for guanosine triphosphate (GTP) in these small GTPases. In their activated GTP-bound state, SAR1A and SAR1B insert into the membrane of the endoplasmic reticulum where they recruit the remainder of the coat protein complex II/COPII which is responsible for both the sorting of proteins and the deformation and budding of membranes into vesicles destined to the Golgi. Its function is as follows. Was first identified based on its probable role in the regulation of pituitary gene transcription. Binds to the prolactin gene (PRL) promoter and seems to activate transcription. The chain is Guanine nucleotide-exchange factor SEC12 from Rattus norvegicus (Rat).